Reading from the N-terminus, the 74-residue chain is Defensin (74 aa).

A signal peptide spans 1 to 22; the sequence is MRGLCICLVFLLVCGLVSATAA. The propeptide occupies 23–36; it reads APAESEVAHLRVRR. 3 disulfides stabilise this stretch: Cys-40-Cys-61, Cys-47-Cys-69, and Cys-51-Cys-71.

Hemolymph.

It localises to the secreted. Antibacterial activity against Gram-positive and Gram-negative bacteria. The polypeptide is Defensin (VSNA1) (Dermacentor variabilis (American dog tick)).